A 567-amino-acid polypeptide reads, in one-letter code: ATP-dependent RNA helicase HAS1 (567 aa).

The disordered stretch occupies residues 1-109; sequence MAKNVNSKAN…AQNDKFEDAG (109 aa). Over residues 30–40 the composition is skewed to acidic residues; it reads EFSDSEDDEVD. A coiled-coil region spans residues 35–88; it reads EDDEVDQEKLVEELDEDFDEVANMLGADVTDPEEKKQSKLERKRKRDEEATAEY. Residues 103 to 131 carry the Q motif motif; that stretch reads DKFEDAGLSEPTMRAISDMGFKTMTKVQA. Positions 134–310 constitute a Helicase ATP-binding domain; it reads IPPLLAGKDV…RISLRPGPLY (177 aa). ATP is bound at residue 147–154; it reads AKTGSGKT. A DEAD box motif is present at residues 257 to 260; it reads DEAD. Residues 324-484 enclose the Helicase C-terminal domain; the sequence is GLEQGYVVCD…EYEFPTNKIV (161 aa).

Belongs to the DEAD box helicase family. DDX18/HAS1 subfamily. As to quaternary structure, associates in the nucleolus with the 60S and pre-60S ribosomal subunits.

Its subcellular location is the nucleus. The protein localises to the nucleolus. It carries out the reaction ATP + H2O = ADP + phosphate + H(+). ATP-dependent RNA helicase involved in 40S ribosomal subunit biogenesis. Required for the processing and cleavage of 35S pre-rRNA at sites A0, A1, and A2, leading to mature 18S rRNA. This is ATP-dependent RNA helicase HAS1 (HAS1) from Scheffersomyces stipitis (strain ATCC 58785 / CBS 6054 / NBRC 10063 / NRRL Y-11545) (Yeast).